Here is a 220-residue protein sequence, read N- to C-terminus: Pyridoxine/pyridoxamine 5'-phosphate oxidase (220 aa).

Substrate-binding positions include 13 to 16 (RVEY) and Lys-77. FMN contacts are provided by residues 72 to 77 (RTVLCK), 87 to 88 (FT), Lys-94, and Gln-116. Positions 134, 138, and 142 each coordinate substrate. Residues 151 to 152 (QS) and Trp-197 contribute to the FMN site. 203–205 (RVH) serves as a coordination point for substrate. Arg-207 is an FMN binding site.

It belongs to the pyridoxamine 5'-phosphate oxidase family. Homodimer. The cofactor is FMN.

It catalyses the reaction pyridoxamine 5'-phosphate + O2 + H2O = pyridoxal 5'-phosphate + H2O2 + NH4(+). The catalysed reaction is pyridoxine 5'-phosphate + O2 = pyridoxal 5'-phosphate + H2O2. The protein operates within cofactor metabolism; pyridoxal 5'-phosphate salvage; pyridoxal 5'-phosphate from pyridoxamine 5'-phosphate: step 1/1. Its pathway is cofactor metabolism; pyridoxal 5'-phosphate salvage; pyridoxal 5'-phosphate from pyridoxine 5'-phosphate: step 1/1. In terms of biological role, catalyzes the oxidation of either pyridoxine 5'-phosphate (PNP) or pyridoxamine 5'-phosphate (PMP) into pyridoxal 5'-phosphate (PLP). The polypeptide is Pyridoxine/pyridoxamine 5'-phosphate oxidase (Mycobacterium sp. (strain KMS)).